A 97-amino-acid polypeptide reads, in one-letter code: Putative pterin-4-alpha-carbinolamine dehydratase (97 aa).

This sequence belongs to the pterin-4-alpha-carbinolamine dehydratase family.

It carries out the reaction (4aS,6R)-4a-hydroxy-L-erythro-5,6,7,8-tetrahydrobiopterin = (6R)-L-erythro-6,7-dihydrobiopterin + H2O. The chain is Putative pterin-4-alpha-carbinolamine dehydratase from Ruegeria pomeroyi (strain ATCC 700808 / DSM 15171 / DSS-3) (Silicibacter pomeroyi).